The primary structure comprises 861 residues: DNA mismatch repair protein MutS (861 aa).

614 to 621 (GPNMGGKS) contacts ATP.

It belongs to the DNA mismatch repair MutS family.

This protein is involved in the repair of mismatches in DNA. It is possible that it carries out the mismatch recognition step. This protein has a weak ATPase activity. The chain is DNA mismatch repair protein MutS from Mannheimia succiniciproducens (strain KCTC 0769BP / MBEL55E).